The sequence spans 683 residues: MHKASTSSANRANFQGNHKTQKSPNNGKAKAKKSPNTDINVADVEMLLNPRSNLTKEQKERRKMMEGFVTKTFERAENESDGSDIDTSASTSNKGKSKAARPTDRKRRLQAEDSPPADANNNNTKNGKDGKVSKESASTQGASATKRKPPRSQGLEHTSPIQVDGEALACPLVRKSLPAAGASGASGPAKSCPLPEKRKSLPAGAAKSKSQVIKQEALEEASNEAQLLALPIETHKTDSIEEGRRVLQWLLNPIKVNHFFDDFWEHTAFVVQRKNPHYYSKLISFKMIDEMLVRHRLDFTINVDVTTYKNGKRETLNPEGRALPPVVWGLYSEGCSIRILNPSTYLVGLRQVCSIMQEFFHCLVGANVYLTPPNSQGFAPHYDDIEAFVIQVEGRKRWRLYEPPSGSDQLCRNSSSNFDQEQLGEPILDEVLEAGDLLYFPRGTVHQAITEEEQHSLHITLSVYQQQAYVNLLEKLMPIVLKKAIKQSVALRRGLPLHTFHVLGEAQRANRSDSRNQLVENVQKLVTKHLMPSAQDIDEAVDQLAKKFQHEALPPIILPEEQVRTVFGSRSTADEQGNAICDYEFDTKTSVRLLRANILRLVTEEDGSVRIYHHVDNGFEYCKYEPIFMEILPEEAAAVELLISAYPYYLTVGQMPLDSAARKVEVVTALWERGLLMTEKPFK.

Over residues 1–26 (MHKASTSSANRANFQGNHKTQKSPNN) the composition is skewed to polar residues. Disordered regions lie at residues 1–162 (MHKA…SPIQ) and 179–208 (AAGA…AAKS). Positions 54–65 (LTKEQKERRKMM) are enriched in basic and acidic residues. Residues 85–94 (IDTSASTSNK) are compositionally biased toward polar residues. A compositionally biased stretch (basic residues) spans 95 to 108 (GKSKAARPTDRKRR). Residues 116–125 (PADANNNNTK) are compositionally biased toward low complexity. Residue Ser152 is modified to Phosphoserine. Thr158 is modified (phosphothreonine). A Phosphoserine modification is found at Ser159. Over residues 179-189 (AAGASGASGPA) the composition is skewed to low complexity. The JmjC domain occupies 341-480 (NPSTYLVGLR…NLLEKLMPIV (140 aa)). Fe cation contacts are provided by His381, Asp383, and His446.

It belongs to the ROX family. NO66 subfamily. Fe(2+) is required as a cofactor.

It is found in the nucleus. It catalyses the reaction N(6),N(6)-dimethyl-L-lysyl(36)-[histone H3] + 2 2-oxoglutarate + 2 O2 = L-lysyl(36)-[histone H3] + 2 formaldehyde + 2 succinate + 2 CO2. Functionally, oxygenase that can act as both a histone lysine demethylase and a ribosomal histidine hydroxylase. Specifically demethylates 'Lys-4' (H3K4me) and 'Lys-36' (H3K36me) of histone H3, thereby playing a central role in histone code. The sequence is that of Bifunctional lysine-specific demethylase and histidyl-hydroxylase NO66 from Drosophila yakuba (Fruit fly).